Consider the following 336-residue polypeptide: Ventral anterior homeobox 1 (336 aa).

The span at 1-34 (MFGKTDKMDVRCHSDTEAARVSKNAHKESREIKG) shows a compositional bias: basic and acidic residues. Disordered stretches follow at residues 1–39 (MFGK…EGSL) and 50–69 (AFSA…NSSA). A DNA-binding region (homeobox) is located at residues 100-159 (PKRTRTSFTAEQLYRLEMEFQRCQYVVGRERTELARQLNLSETQVKVWFQNRRTKQKKDQ). Residues 236-250 (PGPAGAASQHPPAVG) show a composition bias toward low complexity. 2 disordered regions span residues 236–267 (PGPA…HAGA) and 316–336 (SAFE…KALD). Residues 325 to 336 (NNKEGAEKKALD) are compositionally biased toward basic and acidic residues.

The protein belongs to the EMX homeobox family.

It is found in the nucleus. Functionally, transcription factor that may function in dorsoventral specification of the forebrain. Required for axon guidance and major tract formation in the developing forebrain. May contribute to the differentiation of the neuroretina, pigmented epithelium and optic stalk. The protein is Ventral anterior homeobox 1 (Vax1) of Rattus norvegicus (Rat).